A 411-amino-acid polypeptide reads, in one-letter code: Imidazolonepropionase (411 aa).

The Fe(3+) site is built by His78 and His80. Zn(2+) is bound by residues His78 and His80. 3 residues coordinate 4-imidazolone-5-propanoate: Arg87, Tyr150, and His183. Tyr150 contacts N-formimidoyl-L-glutamate. Residue His248 participates in Fe(3+) binding. His248 is a binding site for Zn(2+). Gln251 serves as a coordination point for 4-imidazolone-5-propanoate. Fe(3+) is bound at residue Asp322. Asp322 is a binding site for Zn(2+). 2 residues coordinate N-formimidoyl-L-glutamate: Asn324 and Gly326. 4-imidazolone-5-propanoate is bound at residue Ser327.

Belongs to the metallo-dependent hydrolases superfamily. HutI family. It depends on Zn(2+) as a cofactor. The cofactor is Fe(3+).

The protein resides in the cytoplasm. The catalysed reaction is 4-imidazolone-5-propanoate + H2O = N-formimidoyl-L-glutamate. It functions in the pathway amino-acid degradation; L-histidine degradation into L-glutamate; N-formimidoyl-L-glutamate from L-histidine: step 3/3. Functionally, catalyzes the hydrolytic cleavage of the carbon-nitrogen bond in imidazolone-5-propanoate to yield N-formimidoyl-L-glutamate. It is the third step in the universal histidine degradation pathway. The sequence is that of Imidazolonepropionase from Flavobacterium johnsoniae (strain ATCC 17061 / DSM 2064 / JCM 8514 / BCRC 14874 / CCUG 350202 / NBRC 14942 / NCIMB 11054 / UW101) (Cytophaga johnsonae).